A 405-amino-acid chain; its full sequence is Phosphopentomutase (405 aa).

Mn(2+)-binding residues include Asp-10, Asp-303, His-308, Asp-344, His-345, and His-356.

This sequence belongs to the phosphopentomutase family. Requires Mn(2+) as cofactor.

The protein localises to the cytoplasm. It carries out the reaction 2-deoxy-alpha-D-ribose 1-phosphate = 2-deoxy-D-ribose 5-phosphate. The enzyme catalyses alpha-D-ribose 1-phosphate = D-ribose 5-phosphate. It participates in carbohydrate degradation; 2-deoxy-D-ribose 1-phosphate degradation; D-glyceraldehyde 3-phosphate and acetaldehyde from 2-deoxy-alpha-D-ribose 1-phosphate: step 1/2. Functionally, isomerase that catalyzes the conversion of deoxy-ribose 1-phosphate (dRib-1-P) and ribose 1-phosphate (Rib-1-P) to deoxy-ribose 5-phosphate (dRib-5-P) and ribose 5-phosphate (Rib-5-P), respectively. The protein is Phosphopentomutase of Shewanella woodyi (strain ATCC 51908 / MS32).